The following is a 131-amino-acid chain: Steroid Delta-isomerase (131 aa).

Tyr-16 (proton donor) is an active-site residue. Asp-40 acts as the Proton acceptor in catalysis. Asp-103 contributes to the substrate binding site.

In terms of assembly, homodimer.

It catalyses the reaction a 3-oxo-Delta(5)-steroid = a 3-oxo-Delta(4)-steroid. The chain is Steroid Delta-isomerase (ksi) from Pseudomonas putida (Arthrobacter siderocapsulatus).